The primary structure comprises 306 residues: D-alanine--D-alanine ligase (306 aa).

Catalysis depends on residues Glu18 and Ser150. Residues 104–303 enclose the ATP-grasp domain; sequence KMLWKAFGLP…FEQLVVKILE (200 aa). Position 134-189 (134-189) interacts with ATP; that stretch reads VAKLGLPLMVKPSLEGSSVGLTKVKAVEELKSAVEYALKFDNTILIEEWLAGDELT. Mg(2+) is bound by residues Asp257, Glu270, and Asn272. The active site involves Ser281.

This sequence belongs to the D-alanine--D-alanine ligase family. Mg(2+) serves as cofactor. The cofactor is Mn(2+).

The protein localises to the cytoplasm. It catalyses the reaction 2 D-alanine + ATP = D-alanyl-D-alanine + ADP + phosphate + H(+). The protein operates within cell wall biogenesis; peptidoglycan biosynthesis. Cell wall formation. In Haemophilus influenzae (strain ATCC 51907 / DSM 11121 / KW20 / Rd), this protein is D-alanine--D-alanine ligase.